The primary structure comprises 253 residues: Glutamate racemase (253 aa).

Residues 7–8 and 39–40 each bind substrate; these read DS and YG. The active-site Proton donor/acceptor is Cys-70. 71–72 lines the substrate pocket; it reads NS. Cys-179 acts as the Proton donor/acceptor in catalysis. A substrate-binding site is contributed by 180-181; it reads TH.

The protein belongs to the aspartate/glutamate racemases family.

The enzyme catalyses L-glutamate = D-glutamate. The protein operates within cell wall biogenesis; peptidoglycan biosynthesis. Provides the (R)-glutamate required for cell wall biosynthesis. In Nitratiruptor sp. (strain SB155-2), this protein is Glutamate racemase.